A 354-amino-acid polypeptide reads, in one-letter code: NADH-quinone oxidoreductase subunit H (354 aa).

8 consecutive transmembrane segments (helical) span residues 23–43, 91–111, 124–144, 162–182, 203–223, 250–270, 291–311, and 330–350; these read LVRA…LILW, YIIA…VVPF, LLYV…AGWA, ISYE…TGSL, ILSW…ISGV, GMAF…ISAM, IPGF…FIWL, and IFIP…VSPW.

The protein belongs to the complex I subunit 1 family. In terms of assembly, NDH-1 is composed of 14 different subunits. Subunits NuoA, H, J, K, L, M, N constitute the membrane sector of the complex.

The protein localises to the cell inner membrane. The enzyme catalyses a quinone + NADH + 5 H(+)(in) = a quinol + NAD(+) + 4 H(+)(out). NDH-1 shuttles electrons from NADH, via FMN and iron-sulfur (Fe-S) centers, to quinones in the respiratory chain. The immediate electron acceptor for the enzyme in this species is believed to be ubiquinone. Couples the redox reaction to proton translocation (for every two electrons transferred, four hydrogen ions are translocated across the cytoplasmic membrane), and thus conserves the redox energy in a proton gradient. This subunit may bind ubiquinone. In Ralstonia nicotianae (strain ATCC BAA-1114 / GMI1000) (Ralstonia solanacearum), this protein is NADH-quinone oxidoreductase subunit H.